Consider the following 432-residue polypeptide: Adenylosuccinate synthetase (432 aa).

GTP is bound by residues 12–18 (GDEGKGK) and 40–42 (GHT). Catalysis depends on aspartate 13, which acts as the Proton acceptor. Residues aspartate 13 and glycine 40 each coordinate Mg(2+). Residues 13–16 (DEGK), 38–41 (NAGH), threonine 126, arginine 140, glutamine 219, threonine 234, and arginine 300 each bind IMP. Histidine 41 functions as the Proton donor in the catalytic mechanism. 296 to 302 (STTGRPR) serves as a coordination point for substrate. GTP-binding positions include arginine 302, 328 to 330 (KLD), and 410 to 412 (STG).

This sequence belongs to the adenylosuccinate synthetase family. Homodimer. The cofactor is Mg(2+).

It localises to the cytoplasm. It carries out the reaction IMP + L-aspartate + GTP = N(6)-(1,2-dicarboxyethyl)-AMP + GDP + phosphate + 2 H(+). Its pathway is purine metabolism; AMP biosynthesis via de novo pathway; AMP from IMP: step 1/2. In terms of biological role, plays an important role in the de novo pathway of purine nucleotide biosynthesis. Catalyzes the first committed step in the biosynthesis of AMP from IMP. The protein is Adenylosuccinate synthetase of Aquifex aeolicus (strain VF5).